A 95-amino-acid polypeptide reads, in one-letter code: High mobility group nucleosome-binding domain-containing protein 3 (95 aa).

3 stretches are compositionally biased toward basic and acidic residues: residues 1–25 (MPKR…EPTR), 39–53 (PEPK…KEPG), and 62–72 (GKKEEKQEAGK). The disordered stretch occupies residues 1–95 (MPKRKSPENA…EEVLSTNASH (95 aa)). The residue at position 6 (serine 6) is a Phosphoserine. At serine 78 the chain carries Phosphoserine.

It belongs to the HMGN family. In terms of assembly, interacts with the ligand binding domain of the thyroid receptor (TR) (in vitro). Requires the presence of thyroid hormone for its interaction. Interacts with transcriptional regulator SEHBP. Interacts with nucleosomes.

It is found in the nucleus. Binds to nucleosomes, regulating chromatin structure and consequently, chromatin-dependent processes such as transcription, DNA replication and DNA repair. Affects both insulin and glucagon levels and modulates the expression of pancreatic genes involved in insulin secretion. Regulates the expression of the glucose transporter SLC2A2 by binding specifically to its promoter region and recruiting PDX1 and additional transcription factors. Regulates the expression of SLC6A9, a glycine transporter which regulates the glycine concentration in synaptic junctions in the central nervous system, by binding to its transcription start site. May play a role in ocular development and astrocyte function. The protein is High mobility group nucleosome-binding domain-containing protein 3 (Hmgn3) of Rattus norvegicus (Rat).